Consider the following 459-residue polypeptide: Phosphomethylpyrimidine synthase (459 aa).

Substrate is bound by residues N80, M109, Y139, H175, 195–197 (SRG), 236–239 (DSLR), and E275. H279 provides a ligand contact to Zn(2+). Y302 serves as a coordination point for substrate. H343 serves as a coordination point for Zn(2+). [4Fe-4S] cluster is bound by residues C423, C426, and C431.

The protein belongs to the ThiC family. Requires [4Fe-4S] cluster as cofactor.

The catalysed reaction is 5-amino-1-(5-phospho-beta-D-ribosyl)imidazole + S-adenosyl-L-methionine = 4-amino-2-methyl-5-(phosphooxymethyl)pyrimidine + CO + 5'-deoxyadenosine + formate + L-methionine + 3 H(+). The protein operates within cofactor biosynthesis; thiamine diphosphate biosynthesis. Its function is as follows. Catalyzes the synthesis of the hydroxymethylpyrimidine phosphate (HMP-P) moiety of thiamine from aminoimidazole ribotide (AIR) in a radical S-adenosyl-L-methionine (SAM)-dependent reaction. The chain is Phosphomethylpyrimidine synthase from Prochlorococcus marinus (strain MIT 9211).